The following is a 146-amino-acid chain: MIF-like protein mif-3 (146 aa).

It belongs to the MIF family.

The sequence is that of MIF-like protein mif-3 (mif-3) from Caenorhabditis elegans.